We begin with the raw amino-acid sequence, 637 residues long: ATP-dependent zinc metalloprotease FtsH (637 aa).

The Cytoplasmic portion of the chain corresponds to 1–6 (MNNQGR). Residues 7–27 (SILAWATLFIFVILLFNVFQS) traverse the membrane as a helical segment. The Periplasmic portion of the chain corresponds to 28 to 103 (DSLLGGRNNI…VVPLETRMNT (76 aa)). A helical transmembrane segment spans residues 104 to 124 (FLGFLISWFPMLLLIGVWVFF). Residues 125–637 (MRQMHGGGKA…TKAKKENYAS (513 aa)) are Cytoplasmic-facing. 195 to 202 (GPPGTGKT) lines the ATP pocket. His-417 serves as a coordination point for Zn(2+). Residue Glu-418 is part of the active site. Positions 421 and 495 each coordinate Zn(2+). The tract at residues 603–637 (ENKFPFNDSSTIKIDKEKSPEKTKTTKAKKENYAS) is disordered. Basic and acidic residues predominate over residues 615-637 (KIDKEKSPEKTKTTKAKKENYAS).

In the central section; belongs to the AAA ATPase family. The protein in the C-terminal section; belongs to the peptidase M41 family. As to quaternary structure, homohexamer. Zn(2+) is required as a cofactor.

The protein resides in the cell inner membrane. In terms of biological role, acts as a processive, ATP-dependent zinc metallopeptidase for both cytoplasmic and membrane proteins. Plays a role in the quality control of integral membrane proteins. The chain is ATP-dependent zinc metalloprotease FtsH from Rickettsia conorii (strain ATCC VR-613 / Malish 7).